The chain runs to 219 residues: MNSALNPVAASTAATALTPTSRPLVLGSTSPYRRELLQRLHLPFEVATPDVDETPLPGETPRLLAERLALAKARAVARNFPHAVVIGSDQVADLNGLPLGKPGTHERAVAQLRQMRGQTVVFQTAVAVVCLDSGFEQSSLAAVRVTFRNLTDGEIENYLRAEQPYDCAGSAKSEGLGIALLESIDNDDPTALVGLPLIRTCKMIQAAGVALFADRGEHP.

The Proton acceptor role is filled by aspartate 89.

It belongs to the Maf family. YceF subfamily. Requires a divalent metal cation as cofactor.

The protein resides in the cytoplasm. The catalysed reaction is N(7)-methyl-GTP + H2O = N(7)-methyl-GMP + diphosphate + H(+). Nucleoside triphosphate pyrophosphatase that hydrolyzes 7-methyl-GTP (m(7)GTP). May have a dual role in cell division arrest and in preventing the incorporation of modified nucleotides into cellular nucleic acids. The polypeptide is 7-methyl-GTP pyrophosphatase (Polaromonas sp. (strain JS666 / ATCC BAA-500)).